A 352-amino-acid polypeptide reads, in one-letter code: Phosphate acyltransferase (352 aa).

Residues 328–339 are compositionally biased toward basic and acidic residues; it reads ESFPGDAREREG. Residues 328–352 are disordered; it reads ESFPGDAREREGAPAPDAGTERVAS.

Belongs to the PlsX family. Homodimer. Probably interacts with PlsY.

The protein resides in the cytoplasm. The enzyme catalyses a fatty acyl-[ACP] + phosphate = an acyl phosphate + holo-[ACP]. The protein operates within lipid metabolism; phospholipid metabolism. Catalyzes the reversible formation of acyl-phosphate (acyl-PO(4)) from acyl-[acyl-carrier-protein] (acyl-ACP). This enzyme utilizes acyl-ACP as fatty acyl donor, but not acyl-CoA. This chain is Phosphate acyltransferase, found in Citrifermentans bemidjiense (strain ATCC BAA-1014 / DSM 16622 / JCM 12645 / Bem) (Geobacter bemidjiensis).